The chain runs to 314 residues: NAD-dependent protein lipoamidase sirtuin-4, mitochondrial (314 aa).

The N-terminal 28 residues, 1–28 (MKMSFALTFRSAKGRWIANPSQPCSKAS), are a transit peptide targeting the mitochondrion. The Deacetylase sirtuin-type domain maps to 37–314 (PPLDPEKVKE…GELLPLIDPC (278 aa)). Residues 62–82 (GAGI…VGLY) and 143–146 (QNVD) each bind NAD(+). The active-site Proton acceptor is the H161. 4 residues coordinate Zn(2+): C169, C172, C220, and C223. NAD(+) is bound by residues 260–262 (GSS), 286–288 (NIG), and C304.

Belongs to the sirtuin family. Class II subfamily. Interacts with GLUD1, IDE and SLC25A5. Interacts with DLAT and PDHX. Interacts with MCCC1 (via the biotin carboxylation domain). Interacts with PCCA and PC. Zn(2+) is required as a cofactor. Detected in vascular smooth muscle and striated muscle. Detected in insulin-producing beta-cells in pancreas islets of Langerhans (at protein level). Widely expressed. Weakly expressed in leukocytes and fetal thymus.

The protein localises to the mitochondrion matrix. The enzyme catalyses N(6)-[(R)-lipoyl]-L-lysyl-[protein] + NAD(+) + H2O = 2''-O-lipoyl-ADP-D-ribose + nicotinamide + L-lysyl-[protein]. It catalyses the reaction N(6)-biotinyl-L-lysyl-[protein] + NAD(+) + H2O = 2''-O-biotinyl-ADP-D-ribose + nicotinamide + L-lysyl-[protein]. It carries out the reaction N(6)-acetyl-L-lysyl-[protein] + NAD(+) + H2O = 2''-O-acetyl-ADP-D-ribose + nicotinamide + L-lysyl-[protein]. The catalysed reaction is L-cysteinyl-[protein] + NAD(+) = S-(ADP-D-ribosyl)-L-cysteinyl-[protein] + nicotinamide + H(+). Acts as a NAD-dependent protein lipoamidase, biotinylase, deacetylase and ADP-ribosyl transferase. Catalyzes more efficiently removal of lipoyl- and biotinyl- than acetyl-lysine modifications. Inhibits the pyruvate dehydrogenase complex (PDH) activity via the enzymatic hydrolysis of the lipoamide cofactor from the E2 component, DLAT, in a phosphorylation-independent manner. Catalyzes the transfer of ADP-ribosyl groups onto target proteins, including mitochondrial GLUD1, inhibiting GLUD1 enzyme activity. Acts as a negative regulator of mitochondrial glutamine metabolism by mediating mono ADP-ribosylation of GLUD1: expressed in response to DNA damage and negatively regulates anaplerosis by inhibiting GLUD1, leading to block metabolism of glutamine into tricarboxylic acid cycle and promoting cell cycle arrest. In response to mTORC1 signal, SIRT4 expression is repressed, promoting anaplerosis and cell proliferation. Acts as a tumor suppressor. Also acts as a NAD-dependent protein deacetylase: mediates deacetylation of 'Lys-471' of MLYCD, inhibiting its activity, thereby acting as a regulator of lipid homeostasis. Does not seem to deacetylate PC. Controls fatty acid oxidation by inhibiting PPARA transcriptional activation. Impairs SIRT1-PPARA interaction probably through the regulation of NAD(+) levels. Down-regulates insulin secretion. The protein is NAD-dependent protein lipoamidase sirtuin-4, mitochondrial of Homo sapiens (Human).